The chain runs to 157 residues: uncharacterized protein (157 aa).

Residues 9–146 enclose the N-acetyltransferase domain; the sequence is LLINYKTLDE…GDFYVWHPET (138 aa).

This is an uncharacterized protein from Bacillus cereus (strain ATCC 10987 / NRS 248).